Consider the following 97-residue polypeptide: MSSGATPSNVVLVGKKPVMNYVLAALTLLNQGVSEITIKARGRAISKAVDTVEIVRNRFLPDKIEVKEIRIGSQVVTSQDGRQSRVSTIEIGIRKKA.

K15 carries the N6-acetyllysine modification.

It belongs to the histone-like Alba family. Post-translationally, acetylated. Acetylation at Lys-15 decreases DNA-binding affinity.

It localises to the cytoplasm. The protein resides in the chromosome. In terms of biological role, binds double-stranded DNA tightly but without sequence specificity. Involved in DNA compaction. This chain is DNA/RNA-binding protein Alba, found in Sulfolobus acidocaldarius (strain ATCC 33909 / DSM 639 / JCM 8929 / NBRC 15157 / NCIMB 11770).